The chain runs to 314 residues: tRNA dimethylallyltransferase 1 (314 aa).

Position 17–24 (17–24 (GPTAAGKT)) interacts with ATP. Position 19–24 (19–24 (TAAGKT)) interacts with substrate. The interaction with substrate tRNA stretch occupies residues 42–45 (DSRQ).

Belongs to the IPP transferase family. As to quaternary structure, monomer. It depends on Mg(2+) as a cofactor.

The catalysed reaction is adenosine(37) in tRNA + dimethylallyl diphosphate = N(6)-dimethylallyladenosine(37) in tRNA + diphosphate. In terms of biological role, catalyzes the transfer of a dimethylallyl group onto the adenine at position 37 in tRNAs that read codons beginning with uridine, leading to the formation of N6-(dimethylallyl)adenosine (i(6)A). The protein is tRNA dimethylallyltransferase 1 of Syntrophotalea carbinolica (strain DSM 2380 / NBRC 103641 / GraBd1) (Pelobacter carbinolicus).